Consider the following 130-residue polypeptide: Small ribosomal subunit protein uS8 (130 aa).

It belongs to the universal ribosomal protein uS8 family. As to quaternary structure, part of the 30S ribosomal subunit.

Functionally, one of the primary rRNA binding proteins, it binds directly to 16S rRNA central domain where it helps coordinate assembly of the platform of the 30S subunit. The protein is Small ribosomal subunit protein uS8 of Methanococcoides burtonii (strain DSM 6242 / NBRC 107633 / OCM 468 / ACE-M).